The following is a 273-amino-acid chain: Suppressor protein STM1 (273 aa).

Residues 1–153 are disordered; the sequence is MSNPFDLLGN…PKTAQLSLQD (153 aa). The residue at position 2 (Ser-2) is an N-acetylserine. 3 positions are modified to phosphoserine; by MTOR: Ser-32, Ser-41, and Ser-45. Lys-46 is covalently cross-linked (Glycyl lysine isopeptide (Lys-Gly) (interchain with G-Cter in ubiquitin)). Phosphoserine; by MTOR is present on residues Ser-55 and Ser-73. At Ser-55 the chain carries Phosphoserine. Basic and acidic residues-rich tracts occupy residues 60–77, 89–104, and 111–124; these read AIRDKTAGRRNNRSKDVT, RATDRHSRTGKTDTKK, and GDDKKELSAEKEAQ. At Ser-118 the chain carries Phosphoserine. Residues Lys-121 and Lys-171 each participate in a glycyl lysine isopeptide (Lys-Gly) (interchain with G-Cter in ubiquitin) cross-link. Thr-181 is modified (phosphothreonine; by MTOR). A Glycyl lysine isopeptide (Lys-Gly) (interchain with G-Cter in ubiquitin) cross-link involves residue Lys-184. At Thr-218 the chain carries Phosphothreonine; by MTOR. The disordered stretch occupies residues 219-273; the sequence is RKNFGDRNNNSRNNFNNRRGGRGARKGNNTANATNSANTVQKNRNIDVSNLPSLA. Low complexity-rich tracts occupy residues 224 to 236 and 244 to 257; these read DRNNNSRNNFNNR and KGNNTANATNSANT. Residue Ser-229 is modified to Phosphoserine. Residues 258 to 273 show a composition bias toward polar residues; it reads VQKNRNIDVSNLPSLA.

Belongs to the SERBP1-HABP4 family. In terms of assembly, associates with mature 80S ribosomes. Binds to the head domain of the 40S ribosomal subunit and prevents mRNA binding by inserting its alpha-helix domain towards the mRNA entry tunnel at the decoding site, where it blocks the binding of tRNA and mRNA at the A- and P-sites. Interacts with EFT1; interaction sequesters EFT1 at the A-site of the ribosome, thereby blocking the interaction sites of the mRNA-tRNA complex, promoting ribosome stabilization and hibernation. Interacts with CDC13. Associates with the telomere-proximal Y' element. Phosphorylation by TORC1 upon nutrient replenishment inhibits STM1 and causes its release from dormant ribosomes.

Its subcellular location is the cytoplasm. It localises to the nucleus. The protein resides in the perinuclear region. Ribosome preservation factor that protect a small pool of nontranslating, vacant ribosomes in cells under nutrient starvation conditions. Under nutrient-limiting conditions, cells reduce ribosome biogenesis and degrade ribosomes via autophagy (ribophagy) or proteasomal degradation. To avoid excessive degradation during starvation, STM1 binds to and protects 80S ribosomes from proteasomal degradation. Under nutrient-sufficient conditions, TORC1 phosphorylates and inhibits STM1 to prevent formation of dormant 80S ribosomes. Acts as an inhibitor of mRNA translation by promoting ribosome hibernation: clamps the two ribosomal subunits, thereby preventing their dissociation, and inhibits translation by excluding mRNA-binding. Acts via its association with eEF2 (EFT1), promoting ribosome stabilization and storage in an inactive state. May also repress translation by preventing association of eEF3 (YEF3 and HEF3) with ribosomes. Binds specifically G4 quadruplex (these are four-stranded right-handed helices, stabilized by guanine base quartets) and purine motif triplex (characterized by a third, antiparallel purine-rich DNA strand located within the major groove of a homopurine stretch of duplex DNA) nucleic acid structures. These structures may be present at telomeres or in rRNAs. Acts with CDC13 to control telomere length homeostasis. Involved in the control of the apoptosis-like cell death. This chain is Suppressor protein STM1, found in Saccharomyces cerevisiae (strain ATCC 204508 / S288c) (Baker's yeast).